The sequence spans 274 residues: Large ribosomal subunit protein uL2cz/uL2cy (274 aa).

Disordered stretches follow at residues 1–22 and 223–274; these read MAIHLYKTSTPSTRNGAVDSQV and MNPV…RRTK.

It belongs to the universal ribosomal protein uL2 family. In terms of assembly, part of the 50S ribosomal subunit.

Its subcellular location is the plastid. It is found in the chloroplast. The protein is Large ribosomal subunit protein uL2cz/uL2cy (rpl2-A) of Phaseolus vulgaris (Kidney bean).